The primary structure comprises 234 residues: Sugar fermentation stimulation protein A (234 aa).

The segment at residues 201-220 is a DNA-binding region (H-T-H motif); it reads LLSEAQQRGVEILAYKAELS.

This sequence belongs to the SfsA family.

Functionally, binds to DNA non-specifically. Could be a regulatory factor involved in maltose metabolism. This Escherichia coli (strain SMS-3-5 / SECEC) protein is Sugar fermentation stimulation protein A.